The primary structure comprises 146 residues: Cyanate hydratase (146 aa).

Residues Arg-87, Glu-90, and Ser-113 contribute to the active site.

The protein belongs to the cyanase family.

It catalyses the reaction cyanate + hydrogencarbonate + 3 H(+) = NH4(+) + 2 CO2. Catalyzes the reaction of cyanate with bicarbonate to produce ammonia and carbon dioxide. The protein is Cyanate hydratase of Synechococcus elongatus (strain ATCC 33912 / PCC 7942 / FACHB-805) (Anacystis nidulans R2).